Reading from the N-terminus, the 940-residue chain is Pentatricopeptide repeat-containing protein At5g14770, mitochondrial (940 aa).

A mitochondrion-targeting transit peptide spans 1-24 (MIMIRIWNNYKGKYRFFLSNCRSF). PPR repeat units lie at residues 59–93 (YVSL…GVVP), 94–129 (DSRL…GVSP), 130–161 (DVFA…VISI), 162–196 (DTVT…GILP), 197–231 (DTVS…NLIT), 241–259 (NLHA…GFDP), 260–294 (DVVT…SVYP), 295–329 (NHVT…GIPV), 330–364 (DLVV…NQVP), 365–399 (NVVT…SVIP), 400–434 (NVVT…NVVP), 435–469 (NGFT…GVEE), 470–504 (NNYI…GVTL), 505–539 (DQIN…GMPW), 540–573 (DVVS…GIEP), 574–608 (DIAT…GIKP), 609–643 (SLMS…EIHP), 644–678 (NLTT…GIKL), 679–713 (SRQV…GFIP), 714–748 (DTVT…GISP), 749–783 (NVAT…GMRP), 784–818 (DDFT…GLVP), 819–853 (KTST…GVSP), and 854–891 (NTST…GLLK).

This sequence belongs to the PPR family. P subfamily.

The protein localises to the mitochondrion. This Arabidopsis thaliana (Mouse-ear cress) protein is Pentatricopeptide repeat-containing protein At5g14770, mitochondrial.